We begin with the raw amino-acid sequence, 76 residues long: Conotoxin Vc6.9 (76 aa).

Positions 1-19 are cleaved as a signal peptide; the sequence is MEKLTILLLVAAVLMSTQA. A propeptide spanning residues 20 to 41 is cleaved from the precursor; it reads LMQEQRQKAKINLFSKRKPSAE. Cystine bridges form between Cys-49–Cys-63, Cys-56–Cys-67, and Cys-62–Cys-72.

Belongs to the conotoxin O2 superfamily. Expressed by the venom duct.

It is found in the secreted. Inhibits voltage-gated ion channels. The protein is Conotoxin Vc6.9 of Conus victoriae (Queen Victoria cone).